Consider the following 71-residue polypeptide: uncharacterized protein (71 aa).

A helical membrane pass occupies residues 12–32; the sequence is FLVSIAFFGLAPTIPLLAIAL.

Its subcellular location is the membrane. This is an uncharacterized protein from Sinorhizobium fredii (strain NBRC 101917 / NGR234).